The following is an 832-amino-acid chain: Vacuolar transmembrane transporter penV (832 aa).

2 helical membrane-spanning segments follow: residues 39–59 and 117–137; these read LYTQFVISTALGLSAFLAFCI and FFKFAIRFLLAVFIFAVAIIL. The disordered stretch occupies residues 152–171; it reads WDNPPGNKTTSPIDGSEKEK. Asn-158 is a glycosylation site (N-linked (GlcNAc...) asparagine). The chain crosses the membrane as a helical span at residues 178 to 198; it reads YLWIYVLFAYVFSGLAIYMLL. Residue Asn-214 is glycosylated (N-linked (GlcNAc...) asparagine). Residues 291 to 322 form a disordered region; it reads NDGNALPLTEQQPRDADDERSGLLSGHDNEHV. Residues 302-321 are compositionally biased toward basic and acidic residues; that stretch reads QPRDADDERSGLLSGHDNEH. Transmembrane regions (helical) follow at residues 434–454, 483–503, 524–544, 560–582, 587–608, 623–645, 650–672, 687–707, and 713–733; these read FVIGFLTVFWSVLLVPIASLL, GLPTLAFSLLTVAVPYLYEWL, FFFSFFNLFLLFTVFGTASGF, TIALALANSLEGLAPFYINLLIL, LFPFRLLEFGSVALYPFQFLSA, FSYGFSIPQTILILVICVVYSVF, LICLFGLIYFTVGKFIYKYQLLY, MICNRVFVGLLVHQLAMIGVL, and ITRSLLLVPLLGFTVWFSYWF. The interval 754–777 is disordered; that stretch reads PGGGDISPSPSSTLSPPSGLDRDS. The span at 759-771 shows a compositional bias: low complexity; sequence ISPSPSSTLSPPS.

This sequence belongs to the CSC1 (TC 1.A.17) family.

It is found in the vacuole membrane. Its function is as follows. Vacuolar transmembrane transporter that participates in the first stage of the beta-lactam biosynthesis (the formation of the ACV tripeptide), probably taking part in the supply of amino acids from the vacuolar lumen to the vacuole-anchored ACV synthetase. The chain is Vacuolar transmembrane transporter penV from Penicillium rubens (strain ATCC 28089 / DSM 1075 / NRRL 1951 / Wisconsin 54-1255) (Penicillium chrysogenum).